A 79-amino-acid chain; its full sequence is Small ribosomal subunit protein uS17 (79 aa).

This sequence belongs to the universal ribosomal protein uS17 family. As to quaternary structure, part of the 30S ribosomal subunit.

One of the primary rRNA binding proteins, it binds specifically to the 5'-end of 16S ribosomal RNA. This is Small ribosomal subunit protein uS17 from Rhizobium rhizogenes (strain K84 / ATCC BAA-868) (Agrobacterium radiobacter).